Reading from the N-terminus, the 137-residue chain is ATP synthase epsilon chain (137 aa).

The protein belongs to the ATPase epsilon chain family. As to quaternary structure, F-type ATPases have 2 components, CF(1) - the catalytic core - and CF(0) - the membrane proton channel. CF(1) has five subunits: alpha(3), beta(3), gamma(1), delta(1), epsilon(1). CF(0) has three main subunits: a, b and c.

The protein localises to the cellular thylakoid membrane. Functionally, produces ATP from ADP in the presence of a proton gradient across the membrane. The protein is ATP synthase epsilon chain of Trichodesmium erythraeum (strain IMS101).